Here is a 372-residue protein sequence, read N- to C-terminus: Glutamate 5-kinase (372 aa).

Lys14 is an ATP binding site. The substrate site is built by Ser54, Asp141, and Asn153. 173–174 (TD) serves as a coordination point for ATP. A PUA domain is found at 280–358 (RGRVVIDGGA…SEIESVLGHL (79 aa)).

The protein belongs to the glutamate 5-kinase family.

It localises to the cytoplasm. It catalyses the reaction L-glutamate + ATP = L-glutamyl 5-phosphate + ADP. It participates in amino-acid biosynthesis; L-proline biosynthesis; L-glutamate 5-semialdehyde from L-glutamate: step 1/2. In terms of biological role, catalyzes the transfer of a phosphate group to glutamate to form L-glutamate 5-phosphate. This chain is Glutamate 5-kinase, found in Cupriavidus taiwanensis (strain DSM 17343 / BCRC 17206 / CCUG 44338 / CIP 107171 / LMG 19424 / R1) (Ralstonia taiwanensis (strain LMG 19424)).